The primary structure comprises 505 residues: Glutamate--tRNA ligase (505 aa).

Positions 12 to 22 (PSPTGDPHVGT) match the 'HIGH' region motif. Residues 253–257 (KLSKR) carry the 'KMSKS' region motif. K256 is a binding site for ATP.

The protein belongs to the class-I aminoacyl-tRNA synthetase family. Glutamate--tRNA ligase type 1 subfamily. In terms of assembly, monomer.

The protein localises to the cytoplasm. It catalyses the reaction tRNA(Glu) + L-glutamate + ATP = L-glutamyl-tRNA(Glu) + AMP + diphosphate. Catalyzes the attachment of glutamate to tRNA(Glu) in a two-step reaction: glutamate is first activated by ATP to form Glu-AMP and then transferred to the acceptor end of tRNA(Glu). The protein is Glutamate--tRNA ligase of Chlamydia caviae (strain ATCC VR-813 / DSM 19441 / 03DC25 / GPIC) (Chlamydophila caviae).